The primary structure comprises 232 residues: MTFLILTILATVTPSLYSHVVQRELRVNFEPLAGQRDSWPVARAAMVTFDARSEKAREFSECRMINSMHELSRELMDSPEHTVKRASKEEMDDLVQRCSGSAEGRSWFIWPDTKWCGPGTDAKNESDLGPLEADKCCRTHDHCDYIGAGETKYGLTNKSFFTKLNCKCEAAFDQCLKESIDRAEGSAKSSMEGLHSFYFNTYSPECYEVKCSRKRDAECTNGIAIWKDSYKS.

The N-terminal stretch at 1-18 (MTFLILTILATVTPSLYS) is a signal peptide. A propeptide spanning residues 19 to 105 (HVVQRELRVN…QRCSGSAEGR (87 aa)) is cleaved from the precursor. Ca(2+) is bound by residues tryptophan 115, glycine 117, and glycine 119. Disulfide bonds link cysteine 116-cysteine 137, cysteine 136-cysteine 175, cysteine 143-cysteine 168, cysteine 166-cysteine 206, and cysteine 211-cysteine 219. Asparagine 124 carries an N-linked (GlcNAc...) asparagine glycan. Histidine 140 is an active-site residue. Aspartate 141 is a binding site for Ca(2+). N-linked (GlcNAc...) asparagine glycosylation is present at asparagine 157. Residues 214-217 (KRDA) constitute a propeptide that is removed on maturation.

Belongs to the phospholipase A2 family. Group III subfamily. As to quaternary structure, heterodimer composed of a small subunit and a large subunit; disulfid-linked. Ca(2+) serves as cofactor. Expressed by the venom gland.

The protein localises to the secreted. The enzyme catalyses a 1,2-diacyl-sn-glycero-3-phosphocholine + H2O = a 1-acyl-sn-glycero-3-phosphocholine + a fatty acid + H(+). Scorpion venom phospholipase A2 (PLA2) that shows high hydrolytic activities towards lecithin and acts as an effective blocker of all angiogenesis key steps in vivo and in vitro. It has no effect on apoptosis and does not display hemolytic, inflammatory or neurotoxic effects. PLA2 catalyzes the calcium-dependent hydrolysis of the 2-acyl groups in 3-sn-phosphoglycerides. This Hemiscorpius lepturus (Scorpion) protein is Phospholipase A2 hemilipin.